The sequence spans 142 residues: Large ribosomal subunit protein uL11 (142 aa).

It belongs to the universal ribosomal protein uL11 family. As to quaternary structure, part of the ribosomal stalk of the 50S ribosomal subunit. Interacts with L10 and the large rRNA to form the base of the stalk. L10 forms an elongated spine to which L12 dimers bind in a sequential fashion forming a multimeric L10(L12)X complex. Post-translationally, one or more lysine residues are methylated.

Its function is as follows. Forms part of the ribosomal stalk which helps the ribosome interact with GTP-bound translation factors. The sequence is that of Large ribosomal subunit protein uL11 from Proteus mirabilis (strain HI4320).